Consider the following 691-residue polypeptide: ERI1 exoribonuclease 2 (691 aa).

Residues 37-226 form the Exonuclease domain; that stretch reads LIVIDFESTC…DDSRNTALLA (190 aa). The Mg(2+) site is built by Asp-41, Glu-43, and Asp-156. The Proton acceptor role is filled by Glu-43. Glu-43 is a binding site for AMP. The Proton acceptor role is filled by His-213. His-213 is a binding site for AMP. Asp-218 lines the Mg(2+) pocket. The Zn(2+) site is built by Cys-597, Cys-599, Cys-622, and Cys-634. A GRF-type zinc finger spans residues 597 to 643; the sequence is CKCGRRSKRLVVSNNGPNHGKVFYCCPIGKYQENRKCCGYFKWEQTL.

It belongs to the ERI2 family. The cofactor is Mg(2+).

In Homo sapiens (Human), this protein is ERI1 exoribonuclease 2 (ERI2).